Reading from the N-terminus, the 312-residue chain is Acetyl-coenzyme A carboxylase carboxyl transferase subunit alpha (312 aa).

In terms of domain architecture, CoA carboxyltransferase C-terminal spans 36-286; sequence RLEKEVKSIY…KEYFLDALRT (251 aa).

The protein belongs to the AccA family. In terms of assembly, acetyl-CoA carboxylase is a heterohexamer composed of biotin carboxyl carrier protein (AccB), biotin carboxylase (AccC) and two subunits each of ACCase subunit alpha (AccA) and ACCase subunit beta (AccD).

Its subcellular location is the cytoplasm. It carries out the reaction N(6)-carboxybiotinyl-L-lysyl-[protein] + acetyl-CoA = N(6)-biotinyl-L-lysyl-[protein] + malonyl-CoA. It functions in the pathway lipid metabolism; malonyl-CoA biosynthesis; malonyl-CoA from acetyl-CoA: step 1/1. Functionally, component of the acetyl coenzyme A carboxylase (ACC) complex. First, biotin carboxylase catalyzes the carboxylation of biotin on its carrier protein (BCCP) and then the CO(2) group is transferred by the carboxyltransferase to acetyl-CoA to form malonyl-CoA. This chain is Acetyl-coenzyme A carboxylase carboxyl transferase subunit alpha, found in Helicobacter pylori (strain P12).